A 309-amino-acid chain; its full sequence is Serine/threonine-protein phosphatase 2A catalytic subunit alpha isoform (309 aa).

Mn(2+)-binding residues include D57, H59, D85, and N117. Residues D57, H59, and D85 each coordinate Zn(2+). Fe(3+)-binding residues include D85 and N117. Residue H118 is the Proton donor of the active site. Mn(2+) is bound by residues H167 and H241. The Fe(3+) site is built by H167 and H241. Residue Y307 is modified to Phosphotyrosine. A Leucine methyl ester modification is found at L309.

Belongs to the PPP phosphatase family. PP-1 subfamily. PP2A consists of a common heterodimeric core enzyme composed of PPP2CA, a 36 kDa catalytic subunit (subunit C), and PPP2R1A, a 65 kDa constant regulatory subunit (PR65 or subunit A), that associates with a variety of regulatory subunits. Proteins that associate with the core dimer include three families of regulatory subunits B (the R2/B/PR55/B55, R3/B''/PR72/PR130/PR59 and R5/B'/B56 families), the 48 kDa variable regulatory subunit, viral proteins, and cell signaling molecules. Interacts with the PP2A A subunit PPP2R1A. Interacts with the regulatory subunit PPP2R2A. Interacts (via C-terminus) with PTPA. Interacts with NXN; the interaction is direct. Interacts with KCTD20. Interacts with BTBD10. Interacts with SGO1 and SGO2. Interacts with RAF1. Interaction with IGBP1 protects unassembled PPP2CA from degradative ubiquitination. Interacts with GSK3B (via C2 domain). Interacts with MFHAS1; retains PPP2CA into the cytoplasm and excludes it from the nucleus. Interacts with PABIR1/FAM122A. Interacts with ADCY8; interaction is phosphatase activity-dependent; antagonizes interaction between ADCY8 and calmodulin. Interacts with CRTC3 (when phosphorylated at 'Ser-391'). Interacts with SPRY2; the interaction is inhibited by TESK1 interaction with SPRY2, possibly by vesicular sequestration of SPRY2. Interacts with TRAF3IP3. Interacts with AMBRA1 (via PxP motifs); enhancing interaction between PPP2CA and MYC or FOXO3. Forms a complex with AMBRA1 and BECN1; AMBRA1 and BECN1 components of the complex regulate MYC stability via different pathways. Part of the core of STRIPAK complexes composed of PP2A catalytic and scaffolding subunits, the striatins (PP2A regulatory subunits), the striatin-associated proteins MOB4, STRIP1 and STRIP2, PDCD10 and members of the STE20 kinases, such as STK24 and STK26. Phosphatase component of the Integrator-PP2A (INTAC) complex, composed of the Integrator core complex and protein phosphatase 2A subunits PPP2CA and PPP2R1A. Mn(2+) serves as cofactor. It depends on Fe(3+) as a cofactor. Zn(2+) is required as a cofactor. Post-translationally, reversibly methyl esterified on Leu-309 by leucine carboxyl methyltransferase 1 (Lcmt1) and protein phosphatase methylesterase 1 (Ppme1). Carboxyl methylation influences the affinity of the catalytic subunit for the different regulatory subunits, thereby modulating the PP2A holoenzyme's substrate specificity, enzyme activity and cellular localization. In terms of processing, phosphorylation of either threonine (by autophosphorylation-activated protein kinase) or tyrosine results in inactivation of the phosphatase. Auto-dephosphorylation has been suggested as a mechanism for reactivation. Polyubiquitinated, leading to its degradation by the proteasome.

Its subcellular location is the cytoplasm. The protein resides in the nucleus. It localises to the chromosome. The protein localises to the centromere. It is found in the cytoskeleton. Its subcellular location is the spindle pole. It carries out the reaction O-phospho-L-seryl-[protein] + H2O = L-seryl-[protein] + phosphate. It catalyses the reaction O-phospho-L-threonyl-[protein] + H2O = L-threonyl-[protein] + phosphate. Inhibited by the interaction between PPP2R2A and ARPP19; this inhibition is enhanced when ARPP19 is phosphorylated. Inhibited by the interaction between PPP2R2A and PABIR1/FAM122A. Catalytic subunit of protein phosphatase 2A (PP2A), a serine/threonine phosphatase involved in the regulation of a wide variety of enzymes, signal transduction pathways, and cellular events. PP2A is the major phosphatase for microtubule-associated proteins (MAPs). PP2A can modulate the activity of phosphorylase B kinase casein kinase 2, mitogen-stimulated S6 kinase, and MAP-2 kinase. Cooperates with SGO2 to protect centromeric cohesin from separase-mediated cleavage in oocytes specifically during meiosis I. Can dephosphorylate various proteins, such as AXIN1, p53/TP53, PIM3, WEE1. Activates RAF1 by dephosphorylating it at 'Ser-259'. Mediates dephosphorylation of WEE1, preventing its ubiquitin-mediated proteolysis, increasing WEE1 protein levels, and promoting the G2/M checkpoint. Mediates dephosphorylation of MYC; promoting its ubiquitin-mediated proteolysis: interaction with AMBRA1 enhances interaction between PPP2CA and MYC. Mediates dephosphorylation of FOXO3; promoting its stabilization: interaction with AMBRA1 enhances interaction between PPP2CA and FOXO3. Catalyzes dephosphorylation of the pyrin domain of NLRP3, promoting assembly of the NLRP3 inflammasome. Together with RACK1 adapter, mediates dephosphorylation of AKT1 at 'Ser-473', preventing AKT1 activation and AKT-mTOR signaling pathway. Dephosphorylation of AKT1 is essential for regulatory T-cells (Treg) homeostasis and stability. Catalyzes dephosphorylation of PIM3, promotinh PIM3 ubiquitination and proteasomal degradation. Part of the striatin-interacting phosphatase and kinase (STRIPAK) complexes. STRIPAK complexes have critical roles in protein (de)phosphorylation and are regulators of multiple signaling pathways including Hippo, MAPK, nuclear receptor and cytoskeleton remodeling. Different types of STRIPAK complexes are involved in a variety of biological processes such as cell growth, differentiation, apoptosis, metabolism and immune regulation. Key mediator of a quality checkpoint during transcription elongation as part of the Integrator-PP2A (INTAC) complex. The INTAC complex drives premature transcription termination of transcripts that are unfavorably configured for transcriptional elongation: within the INTAC complex, PPP2CA catalyzes dephosphorylation of the C-terminal domain (CTD) of Pol II subunit POLR2A/RPB1 and SUPT5H/SPT5, thereby preventing transcriptional elongation. This Rattus norvegicus (Rat) protein is Serine/threonine-protein phosphatase 2A catalytic subunit alpha isoform (Ppp2ca).